The primary structure comprises 247 residues: Carboxy-S-adenosyl-L-methionine synthase (247 aa).

Residues tyrosine 40, 65 to 67 (GSS), 90 to 91 (DN), 122 to 123 (DI), asparagine 137, and arginine 204 each bind S-adenosyl-L-methionine.

This sequence belongs to the class I-like SAM-binding methyltransferase superfamily. Cx-SAM synthase family. In terms of assembly, homodimer.

The enzyme catalyses prephenate + S-adenosyl-L-methionine = carboxy-S-adenosyl-L-methionine + 3-phenylpyruvate + H2O. In terms of biological role, catalyzes the conversion of S-adenosyl-L-methionine (SAM) to carboxy-S-adenosyl-L-methionine (Cx-SAM). The chain is Carboxy-S-adenosyl-L-methionine synthase from Pseudomonas syringae pv. syringae (strain B728a).